The primary structure comprises 170 residues: Photosystem I assembly protein Ycf3 (170 aa).

TPR repeat units lie at residues 35–68 (AFCY…EEDP), 72–105 (SYII…NPRL), and 120–153 (GLKA…APNN).

This sequence belongs to the Ycf3 family.

It localises to the plastid. Its subcellular location is the chloroplast thylakoid membrane. In terms of biological role, essential for the assembly of the photosystem I (PSI) complex. May act as a chaperone-like factor to guide the assembly of the PSI subunits. This Gracilaria tenuistipitata var. liui (Red alga) protein is Photosystem I assembly protein Ycf3.